Here is a 187-residue protein sequence, read N- to C-terminus: MQSEKFDINEVKRRMHGASQALQHELGGLRTGRASASMLEPVQVDAYGTHMPLNQVATVSVPEPRLLSVQVWDKSMVKAVEKAIVDSNLGLSPATEGQVLRLRIPELNQDRRKELVKVAHKYAEAARVAVRHVRRDGLDIIKKLEKAHEISEDDQKRLDHEVQKATDATISEIDQLLANKEKEILTV.

The protein belongs to the RRF family.

It is found in the cytoplasm. Functionally, responsible for the release of ribosomes from messenger RNA at the termination of protein biosynthesis. May increase the efficiency of translation by recycling ribosomes from one round of translation to another. In Rhodopseudomonas palustris (strain BisB5), this protein is Ribosome-recycling factor.